The sequence spans 388 residues: Oxytocin receptor (388 aa).

Topologically, residues Met-1–Leu-38 are extracellular. N-linked (GlcNAc...) asparagine glycosylation is found at Asn-8 and Asn-26. The chain crosses the membrane as a helical span at residues Ala-39–Ala-63. At Leu-64–Leu-74 the chain is on the cytoplasmic side. A helical transmembrane segment spans residues Phe-75–Leu-97. The Extracellular portion of the chain corresponds to Leu-98–Arg-113. Residues Cys-112 and Cys-187 are joined by a disulfide bond. Residues Leu-114–Leu-135 traverse the membrane as a helical segment. Over Asp-136 to Arg-154 the chain is Cytoplasmic. A helical transmembrane segment spans residues Leu-155 to Phe-175. Topologically, residues Ser-176–Thr-202 are extracellular. The chain crosses the membrane as a helical span at residues Trp-203–Phe-225. The Cytoplasmic portion of the chain corresponds to Lys-226–Lys-274. The chain crosses the membrane as a helical span at residues Met-275–Val-293. Residues Gln-294–Ser-308 are Extracellular-facing. Residues Ala-309 to Phe-331 form a helical membrane-spanning segment. Over Thr-332–Ala-388 the chain is Cytoplasmic. A disordered region spans residues Ser-354–Ala-388. Ser-365 and Ser-367 each carry phosphoserine. The span at Ser-365 to Ala-388 shows a compositional bias: low complexity.

This sequence belongs to the G-protein coupled receptor 1 family. Vasopressin/oxytocin receptor subfamily.

The protein localises to the cell membrane. Its function is as follows. Receptor for oxytocin. The activity of this receptor is mediated by G proteins which activate a phosphatidylinositol-calcium second messenger system. This Mus musculus (Mouse) protein is Oxytocin receptor (Oxtr).